We begin with the raw amino-acid sequence, 137 residues long: DNA-directed RNA polymerase I subunit RPA14 (137 aa).

Residues 100–137 form a disordered region; it reads PPAQDFSAAPIQVSTTEKKETSIGVSATGGKKTTFADE. Residue S121 is modified to Phosphoserine.

In terms of assembly, component of the RNA polymerase I (Pol I) complex consisting of 14 subunits: RPA135, RPA190, RPC40, RPA14, RPB5, RPO26, RPA43, RPB8, RPA12, RPB10, RPC19, RPC10, RPA49 and RPA34. The complex is composed of a horseshoe-shaped core containing ten subunits (RPA135, RPA190, RPB5, RPO26, RPB8, RPB10, RPC10, RPA12, RPC19 and RPC40) where RPA135 and RPA190 form the DNA-binding cleft. Outside of the core, RPA14 and RPA43 form the stalk that mediates interactions with transcription initiation factors and newly synthesized RNA. In terms of processing, the N-terminus is blocked.

Its subcellular location is the nucleus. It localises to the nucleolus. Functionally, DNA-dependent RNA polymerases catalyze the transcription of DNA into RNA using the four ribonucleoside triphosphates as substrates. Component of RNA polymerase I (Pol I) which synthesizes ribosomal RNA precursors. RPA14 seems to play a role in the stability of subunits RPO26 and RPA43. In vitro, the RPA14-RPA43 subcomplex binds single-stranded RNA. The chain is DNA-directed RNA polymerase I subunit RPA14 (RPA14) from Saccharomyces cerevisiae (strain ATCC 204508 / S288c) (Baker's yeast).